A 382-amino-acid polypeptide reads, in one-letter code: Calcium/calmodulin-dependent protein kinase (382 aa).

Residues 23-278 form the Protein kinase domain; it reads YKFGRTLGAG…SKEALGHIWL (256 aa). Residues 29–37 and K50 each bind ATP; that span reads LGAGTYGVV. D142 acts as the Proton acceptor in catalysis. Positions 291-301 are calmodulin-binding; it reads ELEAYRRRARL. 2 disordered regions span residues 318–344 and 359–382; these read KEHE…GDGS and QKQE…FSNA.

Belongs to the protein kinase superfamily. CAMK Ser/Thr protein kinase family. CaMK subfamily.

The catalysed reaction is L-seryl-[protein] + ATP = O-phospho-L-seryl-[protein] + ADP + H(+). It carries out the reaction L-threonyl-[protein] + ATP = O-phospho-L-threonyl-[protein] + ADP + H(+). The chain is Calcium/calmodulin-dependent protein kinase from Metarhizium anisopliae (Entomophthora anisopliae).